We begin with the raw amino-acid sequence, 194 residues long: Glycerol-3-phosphate acyltransferase (194 aa).

Helical transmembrane passes span 4–24 (EIVLIIGAYLLGSIPTGLLLA), 78–98 (EIWVAATGLAAFLGHVYTVFL), 110–130 (LGVFIGISPLSVLAALAIFVF), 137–157 (YVSLASITAAAAIPFLVALIE), and 161–181 (LLITMSVIIAALVVFKHRENI).

The protein belongs to the PlsY family. In terms of assembly, probably interacts with PlsX.

Its subcellular location is the cell inner membrane. It catalyses the reaction an acyl phosphate + sn-glycerol 3-phosphate = a 1-acyl-sn-glycero-3-phosphate + phosphate. The protein operates within lipid metabolism; phospholipid metabolism. Catalyzes the transfer of an acyl group from acyl-phosphate (acyl-PO(4)) to glycerol-3-phosphate (G3P) to form lysophosphatidic acid (LPA). This enzyme utilizes acyl-phosphate as fatty acyl donor, but not acyl-CoA or acyl-ACP. This chain is Glycerol-3-phosphate acyltransferase, found in Geotalea daltonii (strain DSM 22248 / JCM 15807 / FRC-32) (Geobacter daltonii).